The following is a 323-amino-acid chain: uncharacterized protein (323 aa).

2 consecutive transmembrane segments (helical) span residues 232 to 252 (LASY…FIVL) and 267 to 287 (SLIV…GVIG).

It belongs to the glycosyltransferase 2 family. GtrB subfamily.

The protein resides in the cell membrane. This is an uncharacterized protein from Bacillus subtilis (strain 168).